Here is an 856-residue protein sequence, read N- to C-terminus: Facilitated trehalose transporter Tret1 (856 aa).

Disordered regions lie at residues 1–27 (MSGR…GKLK) and 62–202 (DPFL…KATS). Over 1–389 (MSGRDNRGAG…LEVYRPTTNP (389 aa)) the chain is Cytoplasmic. The span at 69-80 (VSPQRHPQTVRT) shows a compositional bias: polar residues. The segment covering 133–142 (EIREHRDRQQ) has biased composition (basic and acidic residues). Residues 170-180 (GNSNTNNNKAA) are compositionally biased toward polar residues. A phosphoserine mark is found at serine 247, serine 248, serine 249, serine 319, and serine 321. A disordered region spans residues 326-345 (LTSRQHFQQQRSISTDSRKS). Residues 329–340 (RQHFQQQRSIST) are compositionally biased toward polar residues. Residues 390–410 (IFIWTQVLAALSVSLGSLVVG) traverse the membrane as a helical segment. Topologically, residues 411–439 (FVSAYTSPALVSMTDRNITSFEVTQDAGS) are extracellular. A glycan (N-linked (GlcNAc...) asparagine) is linked at asparagine 427. The chain crosses the membrane as a helical span at residues 440 to 460 (WVGGIMPLAGLAGGIAGGPLI). At 461 to 472 (EYLGRRNTILAT) the chain is on the cytoplasmic side. Residues 473–493 (AVPFIVSSLLIACAVNVAMVL) form a helical membrane-spanning segment. At 494–496 (CGR) the chain is on the extracellular side. The chain crosses the membrane as a helical span at residues 497 to 517 (FLAGFCVGIASLSLPVYLGET). At 518–527 (VQPEVRGTLG) the chain is on the cytoplasmic side. Residues 528–548 (LLPTAFGNIGILLCFVAGSFM) traverse the membrane as a helical segment. An N-linked (GlcNAc...) asparagine glycan is attached at asparagine 549. Over 549–551 (NWS) the chain is Extracellular. A helical transmembrane segment spans residues 552-572 (MLAFLGAALPVPFLILMFLIP). Over 573–635 (ETPRWFVSRG…ELLKRNNLKP (63 aa)) the chain is Cytoplasmic. A helical transmembrane segment spans residues 636–656 (LSISLGLMFFQQLSGINAVIF). The Extracellular portion of the chain corresponds to 657-672 (YTVQIFKDAGSTIDGN). A helical transmembrane segment spans residues 673–693 (ICTIIVGVVNFLATFIGIVLI). The Cytoplasmic segment spans residues 694–699 (DRAGRK). Residues 700–720 (ILLYVSNIAMILTLFVLGGFF) traverse the membrane as a helical segment. Residues 721–739 (YCKAHGPDVSNLGWLPLTC) lie on the Extracellular side of the membrane. The helical transmembrane segment at 740-760 (FVIYILGFSLGFGPIPWLMMG) threads the bilayer. Residues 761–766 (EILPAK) lie on the Cytoplasmic side of the membrane. The helical transmembrane segment at 767–787 (IRGSAASVATAFNWSCTFVVT) threads the bilayer. The Extracellular segment spans residues 788 to 800 (KTFQDLTVAMGAH). Residues 801–821 (GAFWLFGAICFVGLFFVIIYV) form a helical membrane-spanning segment. Residues 822-856 (PETQGKTLEDIERKMMGRVRRMSSVANIKPLSFNM) are Cytoplasmic-facing. Residues serine 844 and serine 845 each carry the phosphoserine modification.

It belongs to the major facilitator superfamily. Sugar transporter (TC 2.A.1.1) family. Trehalose transporter subfamily.

The protein localises to the cell membrane. Low-capacity facilitative transporter for trehalose. Does not transport maltose, sucrose or lactose. Mediates the bidirectional transfer of trehalose. Responsible for the transport of trehalose synthesized in the fat body and the incorporation of trehalose into other tissues that require a carbon source, thereby regulating trehalose levels in the hemolymph. The chain is Facilitated trehalose transporter Tret1 from Drosophila erecta (Fruit fly).